We begin with the raw amino-acid sequence, 1909 residues long: NFX1-type zinc finger-containing protein 1 (1909 aa).

Composition is skewed to basic and acidic residues over residues 1 to 12 (MEDRRPHLEARP) and 76 to 107 (RNQEGHTSDEARDQRQSQNDTRRRNDDQEGRS). 2 disordered regions span residues 1–133 (MEDR…QPQQ) and 787–813 (TQSASPAGPENTAQAEGEEEEEGEEEG). Over residues 113–122 (SSDTFQQWHT) the composition is skewed to polar residues. Residues 802-813 (EGEEEEEGEEEG) show a composition bias toward acidic residues. Positions 939-964 (RRRILSYERQYRTWAERMAELRLQED) form a coiled coil. 4 consecutive NF-X1-type zinc fingers follow at residues 1291–1313 (CGHVCTRACHPYDSSHKEFQCMK), 1375–1393 (CGHRCSHLCGEDCVRLCSE), 1433–1455 (CGHPCPGSCHSCFEGRFHERCQQ), and 1463–1480 (CSHKCQEPCTGECPPCQR). The stretch at 1733–1764 (LAKKRLSFSSQELSDLQSEIQRLTYLVNLLMR) forms a coiled coil. An RZ-type zinc finger spans residues 1818–1889 (ISDEERVQIV…LASEMDGAQH (72 aa)). Zn(2+) contacts are provided by cysteine 1840, histidine 1844, cysteine 1860, and cysteine 1863.

The protein belongs to the ZNFX1 family. As to quaternary structure, interacts with MAVS.

It is found in the mitochondrion outer membrane. The protein localises to the cytoplasm. Its subcellular location is the stress granule. Its function is as follows. RNA-binding protein that initiates the antiviral response and is required to restrict the replication of RNA viruses. Acts as a double-stranded RNA (dsRNA) sensor that recognizes viral RNA and then interacts with MAVS to initiate the type I interferon response. Also required for immunity against some bacteria, such as mycobacteria. The polypeptide is NFX1-type zinc finger-containing protein 1 (Mus musculus (Mouse)).